Reading from the N-terminus, the 95-residue chain is Aspartyl/glutamyl-tRNA(Asn/Gln) amidotransferase subunit C (95 aa).

This sequence belongs to the GatC family. As to quaternary structure, heterotrimer of A, B and C subunits.

It carries out the reaction L-glutamyl-tRNA(Gln) + L-glutamine + ATP + H2O = L-glutaminyl-tRNA(Gln) + L-glutamate + ADP + phosphate + H(+). The catalysed reaction is L-aspartyl-tRNA(Asn) + L-glutamine + ATP + H2O = L-asparaginyl-tRNA(Asn) + L-glutamate + ADP + phosphate + 2 H(+). Allows the formation of correctly charged Asn-tRNA(Asn) or Gln-tRNA(Gln) through the transamidation of misacylated Asp-tRNA(Asn) or Glu-tRNA(Gln) in organisms which lack either or both of asparaginyl-tRNA or glutaminyl-tRNA synthetases. The reaction takes place in the presence of glutamine and ATP through an activated phospho-Asp-tRNA(Asn) or phospho-Glu-tRNA(Gln). This chain is Aspartyl/glutamyl-tRNA(Asn/Gln) amidotransferase subunit C, found in Pseudomonas fluorescens (strain ATCC BAA-477 / NRRL B-23932 / Pf-5).